The following is a 406-amino-acid chain: NIPA-like protein 3 (406 aa).

The next 4 helical transmembrane spans lie at 33–53 (NLIG…ALNL), 76–96 (WWLG…SYAF), 101–121 (LIVP…IIFI), and 135–155 (VLSF…VTFA). Asn166 is a glycosylation site (N-linked (GlcNAc...) asparagine). 5 consecutive transmembrane segments (helical) span residues 171–191 (LVSW…CLLL), 202–222 (IVVI…TVKA), 240–260 (PIFY…AAFL), 271–291 (LIAS…GAIF), and 300–320 (VLHI…VFLI). Ser372 is modified (phosphoserine).

Belongs to the NIPA family.

The protein resides in the membrane. This is NIPA-like protein 3 (NIPAL3) from Homo sapiens (Human).